We begin with the raw amino-acid sequence, 75 residues long: MSAEEQEEGGATPAEVIEVVGETGMHGEAMQVKCRIQEGENQGRIIARNVLGPVRVGDVIQLRETAREADSIGGQ.

The protein belongs to the eukaryotic ribosomal protein eS28 family.

This is Small ribosomal subunit protein eS28 from Natronomonas pharaonis (strain ATCC 35678 / DSM 2160 / CIP 103997 / JCM 8858 / NBRC 14720 / NCIMB 2260 / Gabara) (Halobacterium pharaonis).